The sequence spans 542 residues: MATTVTCTRFTDEYQLYEDIGKGAFSVVRRCVKLCTGHEYAAKIINTKKLSARDHQKLEREARICRLLKHSNIVRLHDSISEEGFHYLVFDLVTGGELFEDIVAREYYSEADASHCIQQILEAVLHCHQMGVVHRDLKPENLLLASKCKGAAVKLADFGLAIEVQGDQQAWFGFAGTPGYLSPEVLRKEAYGKPVDIWACGVILYILLVGYPPFWDEDQHKLYQQIKAGAYDFPSPEWDTVTPEAKNLINQMLTINPAKRIMAHEALKHPWVCQRSTVASMMHRQETVECLKKFNARRKLKGAILTTMLATRNFSVGRQTTAPATMSTAASGATMGLVEQAKSLLNKKADGVKPQTNSTKNSAAATSPKGTLPPAALEPQTTVIHNPVDGIKESSDSTHTTIEDEDTKARKQEIIKITEQLIEAVNNGDFEAYAKICDPGLTSFEPEALGNLVEGMDFHRFYFENLLAKNSKPIHTTILNPHVHVIGEDAACIAYIRLTQYIDGQGRPRTSQSEETRVWHRRDGKWQNVHFHCSGAPVAPLQ.

The Protein kinase domain maps to 14-272 (YQLYEDIGKG…AHEALKHPWV (259 aa)). Tyr-17 carries the post-translational modification Phosphotyrosine. Residues 20–28 (IGKGAFSVV) and Lys-43 contribute to the ATP site. Asp-136 functions as the Proton acceptor in the catalytic mechanism. The autoinhibitory domain stretch occupies residues 283–292 (HRQETVECLK). Thr-287 carries the post-translational modification Phosphothreonine; by autocatalysis. The calmodulin-binding stretch occupies residues 291–301 (LKKFNARRKLK). Thr-306 and Thr-307 each carry phosphothreonine; by autocatalysis. Positions 349–407 (ADGVKPQTNSTKNSAAATSPKGTLPPAALEPQTTVIHNPVDGIKESSDSTHTTIEDEDT) are disordered. Positions 354–369 (PQTNSTKNSAAATSPK) are enriched in polar residues. 3 positions are modified to phosphoserine: Ser-367, Ser-394, and Ser-397. Phosphothreonine occurs at positions 400 and 401.

This sequence belongs to the protein kinase superfamily. CAMK Ser/Thr protein kinase family. CaMK subfamily. In terms of assembly, CAMK2 is composed of 4 different chains: alpha (CAMK2A), beta (CAMK2B), gamma (CAMK2G), and delta (CAMK2D). The different isoforms assemble into homo- or heteromultimeric holoenzymes composed of 12 subunits with two hexameric rings stacked one on top of the other. Interacts with SYNGAP1, CAMK2N2 and MPDZ. Interacts with FOXO3. Interacts (when in a kinase inactive state not associated with calmodulin) with ARC; leading to target ARC to inactive synapses. Interacts with CAMK2N1; this interaction requires CAMK2B activation by Ca(2+). Post-translationally, autophosphorylation of Thr-287 following activation by Ca(2+)/calmodulin. Phosphorylation of Thr-287 locks the kinase into an activated state.

Its subcellular location is the cytoplasm. It localises to the cytoskeleton. It is found in the microtubule organizing center. The protein localises to the centrosome. The protein resides in the sarcoplasmic reticulum membrane. Its subcellular location is the synapse. The catalysed reaction is L-seryl-[protein] + ATP = O-phospho-L-seryl-[protein] + ADP + H(+). It catalyses the reaction L-threonyl-[protein] + ATP = O-phospho-L-threonyl-[protein] + ADP + H(+). Its activity is regulated as follows. Activated by Ca(2+)/calmodulin. Binding of calmodulin results in conformational change that relieves intrasteric autoinhibition and allows autophosphorylation of Thr-287 which turns the kinase in a constitutively active form and confers to the kinase a Ca(2+)-independent activity. Calcium/calmodulin-dependent protein kinase that functions autonomously after Ca(2+)/calmodulin-binding and autophosphorylation, and is involved in dendritic spine and synapse formation, neuronal plasticity and regulation of sarcoplasmic reticulum Ca(2+) transport in skeletal muscle. In neurons, plays an essential structural role in the reorganization of the actin cytoskeleton during plasticity by binding and bundling actin filaments in a kinase-independent manner. This structural function is required for correct targeting of CaMK2A, which acts downstream of NMDAR to promote dendritic spine and synapse formation and maintain synaptic plasticity which enables long-term potentiation (LTP) and hippocampus-dependent learning. In developing hippocampal neurons, promotes arborization of the dendritic tree and in mature neurons, promotes dendritic remodeling. Also regulates the migration of developing neurons. Participates in the modulation of skeletal muscle function in response to exercise. In slow-twitch muscles, is involved in regulation of sarcoplasmic reticulum (SR) Ca(2+) transport and in fast-twitch muscle participates in the control of Ca(2+) release from the SR through phosphorylation of triadin, a ryanodine receptor-coupling factor, and phospholamban (PLN/PLB), an endogenous inhibitor of SERCA2A/ATP2A2. In response to interferon-gamma (IFN-gamma) stimulation, catalyzes phosphorylation of STAT1, stimulating the JAK-STAT signaling pathway. Phosphorylates reticulophagy regulator RETREG1 at 'Ser-147' under endoplasmic reticulum stress conditions which enhances RETREG1 oligomerization and its membrane scission and reticulophagy activity. The sequence is that of Calcium/calmodulin-dependent protein kinase type II subunit beta (CAMK2B) from Bos taurus (Bovine).